A 574-amino-acid chain; its full sequence is Developmental and secondary metabolism regulator veA (574 aa).

Disordered regions lie at residues 1-22 (MATR…SRIT), 39-60 (ERAR…VDPP), 255-500 (RSSD…GAGK), and 513-540 (RSYE…YPRR). The region spanning 25–230 (GKKLTYKLNV…AEQGCRVRIR (206 aa)) is the Velvet domain. The Nuclear localization signal motif lies at 39–44 (ERARAC). Composition is skewed to pro residues over residues 314-323 (RPLPPAPGPA) and 330-341 (PAPPAPPAPPSH). 4 stretches are compositionally biased toward polar residues: residues 343–353 (PGYQSHLSFGS), 385–394 (HARNPSTSAE), 406–415 (RMSTERSSYP), and 448–458 (VAQSAAPRSQT). Residues 457–501 (QTPSSSLVPSLPPLKALSGDYPNNLSQSSSSTSQSPSHDLGAGKK) form a PEST region. 2 stretches are compositionally biased toward low complexity: residues 459-474 (PSSS…KALS) and 482-493 (SQSSSSTSQSPS). The span at 513–525 (RSYEDSFGHDDRP) shows a compositional bias: basic and acidic residues.

It belongs to the velvet family. VeA subfamily. Component of the heterotrimeric velvet complex composed of laeA, veA and velB; VeA acting as a bridging protein between laeA and velB.

The protein resides in the nucleus. It localises to the cytoplasm. Functionally, component of the velvet transcription factor complex that controls sexual/asexual developmental ratio in response to light, promoting sexual development in the darkness while stimulating asexual sporulation under illumination. The velvet complex hat acts as a global regulator for secondary metabolite gene expression. Controls the expression of the penicillin gene cluster. The polypeptide is Developmental and secondary metabolism regulator veA (Aspergillus oryzae (strain ATCC 42149 / RIB 40) (Yellow koji mold)).